Consider the following 408-residue polypeptide: Centromere protein U (408 aa).

Positions 1–33 are enriched in basic residues; it reads DRPRPARLSHARFSKNHSGRTHSMKDKAGRKHR. A disordered region spans residues 1-218; it reads DRPRPARLSH…GKRKKPRSYT (218 aa). T72 carries the phosphothreonine; by PLK1 modification. Residue T92 is modified to Phosphothreonine. The segment covering 94 to 103 has biased composition (basic and acidic residues); it reads QEKEAKRSSD. A Phosphoserine modification is found at S102. Residue T104 is modified to Phosphothreonine. S105, S110, and S114 each carry phosphoserine. Positions 118 to 127 are enriched in basic residues; the sequence is SAKKPRRKLK. Phosphoserine occurs at positions 130, 133, and 135. Over residues 176-186 the composition is skewed to polar residues; that stretch reads PQKTGPQSAES. K178 participates in a covalent cross-link: Glycyl lysine isopeptide (Lys-Gly) (interchain with G-Cter in SUMO2). S183 and S187 each carry phosphoserine. Position 192 is a phosphothreonine (T192). Position 222 is a phosphoserine (S222). Residues 273-350 are a coiled coil; sequence SNLKEELIKM…LRKAAYFLSN (78 aa). The Nuclear localization signal motif lies at 293 to 310; sequence KRKNAKIISNIEKKRQRL.

It belongs to the CENP-U/AME1 family. Component of the CENPA-NAC complex, at least composed of CENPA, CENPC, CENPH, CENPM, CENPN, CENPT and CENPU. The CENPA-NAC complex interacts with the CENPA-CAD complex, composed of CENPI, CENPK, CENPL, CENPO, CENPP, CENPQ, CENPR and CENPS. Interacts with MLF1. In terms of processing, phosphorylated by PLK1 at Thr-72, creating a self-tethering site that specifically interacts with the polo-box domain of PLK1.

The protein resides in the cytoplasm. It is found in the nucleus. Its subcellular location is the chromosome. The protein localises to the centromere. It localises to the kinetochore. Its function is as follows. Component of the CENPA-NAC (nucleosome-associated) complex, a complex that plays a central role in assembly of kinetochore proteins, mitotic progression and chromosome segregation. The CENPA-NAC complex recruits the CENPA-CAD (nucleosome distal) complex and may be involved in incorporation of newly synthesized CENPA into centromeres. Plays an important role in the correct PLK1 localization to the mitotic kinetochores. A scaffold protein responsible for the initial recruitment and maintenance of the kinetochore PLK1 population until its degradation. Involved in transcriptional repression. The sequence is that of Centromere protein U (CENPU) from Bos taurus (Bovine).